A 243-amino-acid chain; its full sequence is Sec-independent protein translocase protein TATB, chloroplastic (243 aa).

A chloroplast-targeting transit peptide spans Met-1 to Cys-67. Residues Ala-68–Ser-69 lie on the Lumenal side of the membrane. A helical membrane pass occupies residues Leu-70–Gly-90. Over Pro-91–Arg-243 the chain is Stromal. Disordered regions lie at residues Glu-129 to Tyr-165 and Ile-178 to Arg-243. Composition is skewed to polar residues over residues Val-135–Pro-152 and Asn-187–Pro-204.

This sequence belongs to the TatB family. In thylakoid membranes, TATC and TATB form a large receptor complex, containing about eight TATC-TATB pairs, which binds the precursor protein. Twin arginine signal peptide promotes pH-triggered docking of TATA oligomers to TATC-TATB receptor complex, inducing a conformational switch of TATA that results in activation of the translocase. TATA dissociates from TATC-TATB upon completion of translocation.

The protein resides in the plastid. It is found in the chloroplast thylakoid membrane. Its function is as follows. Part of the twin-arginine translocation (Tat) system that transports large folded proteins containing a characteristic twin-arginine motif in their signal peptide across the thylakoid membrane. Involved in delta pH-dependent protein transport required for chloroplast development, especially thylakoid membrane formation. TATC and TATB mediate precursor recognition, whereas TATA facilitates translocation. This Zea mays (Maize) protein is Sec-independent protein translocase protein TATB, chloroplastic.